We begin with the raw amino-acid sequence, 229 residues long: Potassium/proton antiporter CemA (229 aa).

Helical transmembrane passes span 6-26 (AFIP…ISLC), 107-127 (ILHF…SFWG), and 189-209 (ILSG…KYWI).

Belongs to the CemA family.

Its subcellular location is the plastid. The protein resides in the chloroplast inner membrane. It catalyses the reaction K(+)(in) + H(+)(out) = K(+)(out) + H(+)(in). Contributes to K(+)/H(+) antiport activity by supporting proton efflux to control proton extrusion and homeostasis in chloroplasts in a light-dependent manner to modulate photosynthesis. Prevents excessive induction of non-photochemical quenching (NPQ) under continuous-light conditions. Indirectly promotes efficient inorganic carbon uptake into chloroplasts. The chain is Potassium/proton antiporter CemA from Lepidium virginicum (Virginia pepperweed).